The primary structure comprises 504 residues: Phosphoenolpyruvate carboxylase (504 aa).

The span at 1–16 shows a compositional bias: polar residues; the sequence is MTSRKIPSIMGTQHPD. Residues 1-21 form a disordered region; sequence MTSRKIPSIMGTQHPDNANAP.

It belongs to the PEPCase type 2 family. Homotetramer. The cofactor is Mg(2+).

The catalysed reaction is oxaloacetate + phosphate = phosphoenolpyruvate + hydrogencarbonate. Catalyzes the irreversible beta-carboxylation of phosphoenolpyruvate (PEP) to form oxaloacetate (OAA), a four-carbon dicarboxylic acid source for the tricarboxylic acid cycle. The protein is Phosphoenolpyruvate carboxylase of Leuconostoc mesenteroides subsp. mesenteroides (strain ATCC 8293 / DSM 20343 / BCRC 11652 / CCM 1803 / JCM 6124 / NCDO 523 / NBRC 100496 / NCIMB 8023 / NCTC 12954 / NRRL B-1118 / 37Y).